The chain runs to 455 residues: P2X purinoceptor 5 (455 aa).

Residues 1–34 are Cytoplasmic-facing; that stretch reads MGQAAWKGFVLSLFDYKTAKFVVAKSKKVGLLYR. The chain crosses the membrane as a helical span at residues 35-55; it reads VLQLIILLYLLIWVFLIKKSY. Residues 56–341 lie on the Extracellular side of the membrane; the sequence is QDIDTSLQSA…SIIPTVINIG (286 aa). Positions 69 and 71 each coordinate ATP. N77 carries N-linked (GlcNAc...) asparagine glycosylation. 3 cysteine pairs are disulfide-bonded: C118–C169, C129–C152, and C135–C163. A glycan (N-linked (GlcNAc...) asparagine) is linked at N157. Position 189 (T189) interacts with ATP. An N-linked (GlcNAc...) asparagine glycan is attached at N202. Intrachain disulfides connect C220-C229 and C263-C272. Residues N294, R296, and K314 each coordinate ATP. Residues 342-362 form a helical membrane-spanning segment; it reads SGLALMGAGAFFCDLVLIYLI. Residues 363–455 are Cytoplasmic-facing; the sequence is RKSEFYRDKK…QSQILHPVKT (93 aa). Acidic residues predominate over residues 384-401; sequence NVEVEANEMEQERPEDEP. Residues 384–422 are disordered; the sequence is NVEVEANEMEQERPEDEPLERVRQDEQSQELAQSGRKQN. The span at 412–422 shows a compositional bias: polar residues; it reads QELAQSGRKQN.

The protein belongs to the P2X receptor family. As to quaternary structure, functional P2XRs are organized as homomeric and heteromeric trimers. Homotrimer. Forms heterotrimer with P2RX1. In terms of tissue distribution, predominantly expressed in heart but are also present in brain, spinal cord and adrenal gland.

The protein localises to the cell membrane. The catalysed reaction is Na(+)(in) = Na(+)(out). It carries out the reaction Ca(2+)(in) = Ca(2+)(out). It catalyses the reaction chloride(in) = chloride(out). Activated by ATP. Slowly desensitizing. Not activated by ATP agonist alpha/beta-methylene-ATP. Highly sensitive to the antagonists suramin and PPADS. Functionally, ATP-gated nonselective transmembrane cation channel. Permeable to potassium, sodium and calcium. Unlike other P2RX receptors, the P2X5 receptor is also permeable to chloride. Acts as an important regulator of inflammatory-related bone loss and osteoclast multinucleation. The chain is P2X purinoceptor 5 (P2rx5) from Rattus norvegicus (Rat).